The primary structure comprises 1131 residues: Replication factor C subunit 1 (1131 aa).

4 disordered regions span residues 14-87, 92-111, 120-201, and 225-378; these read KKPV…KSEK, YKPG…ETDE, AASK…NDEA, and ARTL…NYQA. The segment covering 38-54 has biased composition (basic and acidic residues); sequence GVKEAKVNNSGKEDASK. Residue Lys-49 forms a Glycyl lysine isopeptide (Lys-Gly) (interchain with G-Cter in SUMO2) linkage. Tyr-66 carries the phosphotyrosine modification. Phosphoserine occurs at positions 68, 70, 72, and 107. Thr-109 carries the post-translational modification Phosphothreonine. The span at 127 to 138 shows a compositional bias: polar residues; that stretch reads NGVSTNSYLGTS. Residue Ser-155 is modified to Phosphoserine. 2 positions are modified to phosphothreonine: Thr-160 and Thr-162. Ser-163, Ser-172, Ser-189, Ser-244, Ser-250, Ser-253, Ser-281, and Ser-309 each carry phosphoserine. Positions 184 to 201 are enriched in basic and acidic residues; sequence KRKESSQNTEDSRLNDEA. A compositionally biased stretch (low complexity) spans 308–319; sequence SSPKASAKLALM. Composition is skewed to basic and acidic residues over residues 334–350 and 359–373; these read AARR…EKTT and TKRE…EKKR. Positions 354 to 528 are interferon-stimulated-response-element binding region; the sequence is TKVSPTKRES…KKESESKKCK (175 aa). Residue Ser-365 is modified to Phosphoserine. Residues 399–489 form the BRCT domain; it reads GAENCLEGLT…PGKRSKYEMA (91 aa). The interval 491–525 is disordered; it reads EAEMKKEKSKLERTPQKNDQGKRKISPAKKESESK. Residue Ser-535 is modified to Phosphoserine. 635–642 lines the ATP pocket; it reads GPPGVGKT. The tract at residues 1073 to 1131 is disordered; that stretch reads PALDSEYSEEFQEDDTQSEKEQDAVETDAMIKKKTRSSKPSKSEREKESKKGKGKNWKK. The segment covering 1078–1088 has biased composition (acidic residues); the sequence is EYSEEFQEDDT. A Phosphoserine modification is found at Ser-1090. Positions 1104 to 1108 match the Nuclear localization signal motif; that stretch reads KKKTR. Basic and acidic residues predominate over residues 1113–1123; the sequence is SKSEREKESKK.

Belongs to the activator 1 large subunit family. Large subunit of the RFC complex, an heteropentameric complex consisting of RFC1 and four small subunits RFC2, RFC3, RFC4 and RFC5; the RFC complex interacts with PCNA and the interaction involves RFC1.

It is found in the nucleus. Functionally, subunit of the replication factor C (RFC) complex which acts during elongation of primed DNA templates by DNA polymerases delta and epsilon, and is necessary for ATP-dependent loading of proliferating cell nuclear antigen (PCNA) onto primed DNA. This subunit binds to the primer-template junction. Binds the PO-B transcription element as well as other GA rich DNA sequences. Can bind single- or double-stranded DNA. The protein is Replication factor C subunit 1 (Rfc1) of Mus musculus (Mouse).